The chain runs to 393 residues: Yellow-related salivary protein SP03B (393 aa).

The first 18 residues, 1-18 (MKIFLCLIAVVFLQGVVG), serve as a signal peptide directing secretion. Asn-29 is a glycosylation site (N-linked (GlcNAc...) asparagine).

It belongs to the major royal jelly protein family. Female salivary gland (at protein level).

It localises to the secreted. In terms of biological role, probably modulates blood feeding of sand flies on vertebrate species by binding and sequestering different mediators involved in the host response. Binds biogenic amines. Binds serotonin with high affinity. Poorly binds histamine. Does not bind dopamine, noradrenaline, adrenaline and octopamine. In Phlebotomus perniciosus (Phlebotomine sand fly), this protein is Yellow-related salivary protein SP03B.